A 51-amino-acid chain; its full sequence is U-Asilidin(1)-Eru1a (51 aa).

The signal sequence occupies residues 1–23 (MANYIDVLSFLAIICATVLATLA). 3 cysteine pairs are disulfide-bonded: C26–C40, C33–C44, and C39–C49.

It belongs to the asilidin-1 family. In terms of tissue distribution, expressed by the venom gland. The most highly expressed peptides U-Asilidin1-Mar1a is around 3000 times higher expressed in the venom thoracic glands compared to its body tissues.

It is found in the secreted. Functionally, induces neurotoxic effect on honeybees, including slow movements, disorientation and paralysis. Since it provokes similar symptoms than omega-atracotoxin, it is probable that it acts in the same way by inhibiting voltage-gated calcium channels. The sequence is that of U-Asilidin(1)-Eru1a from Eutolmus rufibarbis (Golden-tabbed robberfly).